We begin with the raw amino-acid sequence, 757 residues long: Chloride anion exchanger (757 aa).

The Cytoplasmic segment spans residues 1–71 (MIEAIGNQYV…SWLPAYKIKE (71 aa)). The chain crosses the membrane as a helical span at residues 72–92 (WLLSDIVSGISTGLVAVLQGL). A topological domain (extracellular) is located at residue Ala93. The chain crosses the membrane as a helical span at residues 94 to 114 (FALLVNIPPAYGLYAAFFPVI). Topologically, residues 115 to 124 (TYFFLGTSRH) are cytoplasmic. A helical membrane pass occupies residues 125–145 (ISVGPFPVLSMMVGVVVTRVV). The Extracellular portion of the chain corresponds to 146–176 (SDPNASSELSSSSTENDSFIEEKVMVAASVT). 2 N-linked (GlcNAc...) asparagine glycosylation sites follow: Asn149 and Asn161. The chain crosses the membrane as a helical span at residues 177-197 (VLSGIIQLLLGVLQVGFVVIY). The Cytoplasmic portion of the chain corresponds to 198–201 (LSES). The chain crosses the membrane as a helical span at residues 202-222 (LISGFTTAAAIHVLVSQLKFM). The Extracellular portion of the chain corresponds to 223–250 (LQLPVPAYSDPFSIFKVLESVFTQIQKT). Residues 251-271 (NIADLVTSVIILVVVFVFKEI) traverse the membrane as a helical segment. At 272–278 (NQRYRSK) the chain is on the cytoplasmic side. Residues 279–299 (LPVPIPIELIMTVIATGVSYG) traverse the membrane as a helical segment. Residues 300 to 335 (CNFEDRFGVAVVGNMSLGFQPPITPSVEVFQDTIGD) lie on the Extracellular side of the membrane. The helical transmembrane segment at 336–356 (SFGIAIVGFAVAFSVASVYSL) threads the bilayer. Over 357–367 (KYDYPIDGNQE) the chain is Cytoplasmic. Residues 368–388 (LIALGVSNIFTGAFKGFAGST) traverse the membrane as a helical segment. Over 389 to 404 (ALSRSGVQESTGGKTQ) the chain is Extracellular. The chain crosses the membrane as a helical span at residues 405-425 (VAGLLSAVIVLIVIVAIGFLL). At 426–462 (QPLQKSVLAALALGNLKGMLMQFAEIGRLWKKDKYDC) the chain is on the cytoplasmic side. A helical transmembrane segment spans residues 463–483 (LIWIMTFIFAIVLGLGLGLAA). Residues 484-757 (SVAFQLLTIV…ECQVPVETKF (274 aa)) are Extracellular-facing. One can recognise an STAS domain in the interval 518–713 (NYAEVYEPEG…LTIHDAILHI (196 aa)). The short motif at 754 to 757 (ETKF) is the PDZ-binding element.

The protein belongs to the SLC26A/SulP transporter (TC 2.A.53) family. In terms of assembly, interacts with PDZK1. Interacts with CFTR, SLC26A6 and NHERF1. Interacts (via PDZ-binding motif) with NHERF4 (via the third PDZ domain). This interaction leads to decreased expression of SLC26A3 on the cell membrane resulting in its reduced exchanger activity. In terms of processing, N-glycosylation is required for efficient cell surface expression, and protection from proteolytic degradation. As to expression, expressed in spermatogenic cells. Expressed at high levels in cecum and colon and at lower levels in small intestine.

It is found in the apical cell membrane. Its subcellular location is the membrane. It localises to the cell membrane. The catalysed reaction is hydrogencarbonate(in) + 2 chloride(out) = hydrogencarbonate(out) + 2 chloride(in). In terms of biological role, mediates chloride-bicarbonate exchange with a chloride bicarbonate stoichiometry of 2:1 in the intestinal epithelia. Plays a role in the chloride and bicarbonate homeostasis during sperm epididymal maturation and capacitation. This Mus musculus (Mouse) protein is Chloride anion exchanger (Slc26a3).